We begin with the raw amino-acid sequence, 352 residues long: Serine/threonine-protein phosphatase 2A activator 2 (352 aa).

The protein belongs to the PTPA-type PPIase family.

Its subcellular location is the cytoplasm. It catalyses the reaction [protein]-peptidylproline (omega=180) = [protein]-peptidylproline (omega=0). Its function is as follows. PPIases accelerate the folding of proteins. It catalyzes the cis-trans isomerization of proline imidic peptide bonds in oligopeptides. Acts as a regulatory subunit for PP2A-like phosphatases modulating their activity or substrate specificity, probably by inducing a conformational change in the catalytic subunit, a direct target of the PPIase. Can reactivate inactive phosphatase PP2A-phosphatase methylesterase complexes (PP2Ai) in presence of ATP and Mg(2+) by dissociating the inactive form from the complex. The polypeptide is Serine/threonine-protein phosphatase 2A activator 2 (rrd2) (Schizosaccharomyces pombe (strain 972 / ATCC 24843) (Fission yeast)).